The following is a 259-amino-acid chain: Exotoxin A regulatory protein (259 aa).

It localises to the cell inner membrane. In terms of biological role, positive regulation of toxA gene transcription. This chain is Exotoxin A regulatory protein (toxR), found in Pseudomonas aeruginosa (strain ATCC 15692 / DSM 22644 / CIP 104116 / JCM 14847 / LMG 12228 / 1C / PRS 101 / PAO1).